Consider the following 156-residue polypeptide: UPF0251 protein Sfum_2819 (156 aa).

It belongs to the UPF0251 family.

The sequence is that of UPF0251 protein Sfum_2819 from Syntrophobacter fumaroxidans (strain DSM 10017 / MPOB).